The sequence spans 449 residues: MRGEIMKEKCGIFGAYSQDATKKTYYGLMALQHRGQEGAGISVWDGDIRTVKGHGLVSEVFKGGSIRRLNGNPVIGHVRYSTSGSLSEVQPLEVECCGYKVSIAHNGTLTNFLPLRRFYESRGFKFRSSIDTEVIAVSFLNHYSELKDEFEAMSRVFEEVKGAYSVLMLFNGKLIAVRDPVGFRPLSFGAGDGYYFSSEDSALRMFCTNIRDVSPGEVIVVKDGEAESKIVGRSEHAYCVFEYIYFARPDSIINGISVYWARYRMGVELARESPAEGDVVIAVPDSGRTAALGFAHESGIPYMEGLIKNRYIGRTFIMPSGREIKVRLKLSPVKEVIKGRRIVLVDDSIVRGTTMKNIVKMLRDAGAREVHVRIASPPIRYPCYMGIDIPTRHELIAAWKSIEEIKKEIGADSLAYLSVEGLKRAIGTDKLCMACLTGNYPEWAFDFKV.

Positions 1–9 (MRGEIMKEK) are excised as a propeptide. C10 serves as the catalytic Nucleophile. The Glutamine amidotransferase type-2 domain occupies 10 to 224 (CGIFGAYSQD…PGEVIVVKDG (215 aa)). C239 is a binding site for [4Fe-4S] cluster. S286, D346, and D347 together coordinate Mg(2+). [4Fe-4S] cluster contacts are provided by C383, C432, and C435.

In the C-terminal section; belongs to the purine/pyrimidine phosphoribosyltransferase family. The cofactor is Mg(2+). [4Fe-4S] cluster is required as a cofactor.

The enzyme catalyses 5-phospho-beta-D-ribosylamine + L-glutamate + diphosphate = 5-phospho-alpha-D-ribose 1-diphosphate + L-glutamine + H2O. Its pathway is purine metabolism; IMP biosynthesis via de novo pathway; N(1)-(5-phospho-D-ribosyl)glycinamide from 5-phospho-alpha-D-ribose 1-diphosphate: step 1/2. In terms of biological role, catalyzes the formation of phosphoribosylamine from phosphoribosylpyrophosphate (PRPP) and glutamine. This Pyrococcus horikoshii (strain ATCC 700860 / DSM 12428 / JCM 9974 / NBRC 100139 / OT-3) protein is Amidophosphoribosyltransferase.